A 369-amino-acid chain; its full sequence is Anthranilate phosphoribosyltransferase (369 aa).

Residues Gly-111, 114-115 (GD), Thr-119, 121-124 (NIST), 139-147 (KHGNRGVSS), and Ser-151 each bind 5-phospho-alpha-D-ribose 1-diphosphate. Gly-111 serves as a coordination point for anthranilate. Ser-123 provides a ligand contact to Mg(2+). Residue Asn-142 coordinates anthranilate. Anthranilate is bound at residue Arg-197. 2 residues coordinate Mg(2+): Asp-256 and Glu-257.

Belongs to the anthranilate phosphoribosyltransferase family. As to quaternary structure, homodimer. Mg(2+) is required as a cofactor.

It carries out the reaction N-(5-phospho-beta-D-ribosyl)anthranilate + diphosphate = 5-phospho-alpha-D-ribose 1-diphosphate + anthranilate. It participates in amino-acid biosynthesis; L-tryptophan biosynthesis; L-tryptophan from chorismate: step 2/5. In terms of biological role, catalyzes the transfer of the phosphoribosyl group of 5-phosphorylribose-1-pyrophosphate (PRPP) to anthranilate to yield N-(5'-phosphoribosyl)-anthranilate (PRA). The sequence is that of Anthranilate phosphoribosyltransferase from Cupriavidus pinatubonensis (strain JMP 134 / LMG 1197) (Cupriavidus necator (strain JMP 134)).